The sequence spans 97 residues: Large ribosomal subunit protein bL27 (97 aa).

Polar residues predominate over residues 1–10 (MVKLNLSNLQ). Residues 1 to 12 (MVKLNLSNLQHF) constitute a propeptide that is removed on maturation. The interval 1-38 (MVKLNLSNLQHFAHKKGGGSTSNGRDSQAKRLGAKAAD) is disordered.

This sequence belongs to the bacterial ribosomal protein bL27 family. Post-translationally, the N-terminus is cleaved by ribosomal processing cysteine protease Prp.

The polypeptide is Large ribosomal subunit protein bL27 (Streptococcus equi subsp. zooepidemicus (strain H70)).